The following is a 197-amino-acid chain: MFGCLVAGRLVQTAAQQVAEDKFVFDLPDYENINHVVVFMLGTVPFPEGMGGSVYFSYPDSNGMPVWQLLGFVTNGKPSAIFKISGLKSGEGSQHPFGTMNIVRTPSVAQIGISVELLDSLAQQTPVGNAAVSSVDSFTQFTQKMLDNFYNFASSFAVSQAQMTPSPSEMFIPANVVLKWYENFQRRLAQNPLFWKT.

The interval valine 18–tyrosine 55 is required for F-X-F-G repeats-nucleoporins recognition and nuclear import. The tract at residues glutamine 124 to serine 134 is flexible linker region involved in nuclear import of HSP70 proteins.

The protein belongs to the OPI10 family. As to quaternary structure, forms an asymmetric homodimer; required for binding and nuclear import of HSP70 proteins. Interacts with ATP-bound HSP70 proteins. Interacts with NUP62 and NUP153 (via F-X-F-G repeats). Interacts with HSPA8.

It localises to the cytoplasm. The protein localises to the cytosol. The protein resides in the nucleus. Its function is as follows. Acts as a specific nuclear import carrier for HSP70 proteins following heat-shock stress: acts by mediating the nucleoporin-dependent translocation of ATP-bound HSP70 proteins into the nucleus. HSP70 proteins import is required to protect cells from heat shock damages. Does not translocate ADP-bound HSP70 proteins into the nucleus. In Bos taurus (Bovine), this protein is Protein Hikeshi.